The sequence spans 209 residues: Uracil phosphoribosyltransferase (209 aa).

Residues Arg-79, Arg-104, and Asp-131–Thr-139 contribute to the 5-phospho-alpha-D-ribose 1-diphosphate site. Uracil-binding positions include Ile-194 and Gly-199 to Ala-201. A 5-phospho-alpha-D-ribose 1-diphosphate-binding site is contributed by Asp-200.

The protein belongs to the UPRTase family. It depends on Mg(2+) as a cofactor.

It catalyses the reaction UMP + diphosphate = 5-phospho-alpha-D-ribose 1-diphosphate + uracil. It participates in pyrimidine metabolism; UMP biosynthesis via salvage pathway; UMP from uracil: step 1/1. Its activity is regulated as follows. Allosterically activated by GTP. Catalyzes the conversion of uracil and 5-phospho-alpha-D-ribose 1-diphosphate (PRPP) to UMP and diphosphate. This is Uracil phosphoribosyltransferase from Caulobacter sp. (strain K31).